The primary structure comprises 284 residues: 4-diphosphocytidyl-2-C-methyl-D-erythritol kinase (284 aa).

The active site involves K14. 98–108 (PMGGGIGGGSS) provides a ligand contact to ATP. D140 is an active-site residue.

The protein belongs to the GHMP kinase family. IspE subfamily.

The enzyme catalyses 4-CDP-2-C-methyl-D-erythritol + ATP = 4-CDP-2-C-methyl-D-erythritol 2-phosphate + ADP + H(+). Its pathway is isoprenoid biosynthesis; isopentenyl diphosphate biosynthesis via DXP pathway; isopentenyl diphosphate from 1-deoxy-D-xylulose 5-phosphate: step 3/6. Functionally, catalyzes the phosphorylation of the position 2 hydroxy group of 4-diphosphocytidyl-2C-methyl-D-erythritol. This chain is 4-diphosphocytidyl-2-C-methyl-D-erythritol kinase, found in Shewanella woodyi (strain ATCC 51908 / MS32).